The primary structure comprises 379 residues: Sialidase-2 (379 aa).

The FRIP motif signature appears at 20 to 23 (YRIP). Substrate contacts are provided by R21 and R41. D46 acts as the Proton acceptor in catalysis. Residues 127–138 (VSSTDHGRTWSP) form a BNR 1 repeat. Residues Y179 and Y181 each contribute to the substrate site. A BNR 2 repeat occupies 197–208 (FISLDHGHTWKL). Substrate is bound by residues E218, R237, and R303. R303 is an active-site residue. The Nucleophile role is filled by Y333. The active site involves E354.

This sequence belongs to the glycosyl hydrolase 33 family. In terms of tissue distribution, highly expressed in heart.

It is found in the cytoplasm. The protein resides in the cytosol. The catalysed reaction is Hydrolysis of alpha-(2-&gt;3)-, alpha-(2-&gt;6)-, alpha-(2-&gt;8)- glycosidic linkages of terminal sialic acid residues in oligosaccharides, glycoproteins, glycolipids, colominic acid and synthetic substrates.. It carries out the reaction a ganglioside GD1a + H2O = a ganglioside GM1 + N-acetylneuraminate. It catalyses the reaction a ganglioside GM1 + H2O = a ganglioside GA1 + N-acetylneuraminate. The enzyme catalyses a ganglioside GT1b + H2O = a ganglioside GD1b + N-acetylneuraminate. The catalysed reaction is a ganglioside GD1b + H2O = a ganglioside GM1 + N-acetylneuraminate. It carries out the reaction a ganglioside GD3 + H2O = a ganglioside GM3 + N-acetylneuraminate. It catalyses the reaction a ganglioside GM3 + H2O = a beta-D-galactosyl-(1-&gt;4)-beta-D-glucosyl-(1&lt;-&gt;1)-ceramide + N-acetylneuraminate. The enzyme catalyses a ganglioside GM2 + H2O = a ganglioside GA2 + N-acetylneuraminate. The catalysed reaction is a neolactoside IV(3)-alpha-NeuAc-nLc4Cer(d18:1(4E)) + H2O = a neolactoside nLc4Cer(d18:1(4E)) + N-acetylneuraminate. It carries out the reaction N-acetyl-alpha-neuraminosyl-(2-&gt;3)-beta-D-galactosyl-(1-&gt;4)-D-glucose + H2O = lactose + N-acetylneuraminate. Exo-alpha-sialidase that catalyzes the hydrolytic cleavage of the terminal sialic acid (N-acetylneuraminic acid, Neu5Ac) of a glycan moiety in the catabolism of glycolipids, glycoproteins and oligosacharides. Recognizes sialyl linkage positions of the glycan moiety as well as the supramolecular organization of the sialoglycoconjugate. Displays preference for alpha-(2-&gt;3)-sialylated GD1a and GT1B gangliosides over alpha-(2-&gt;8)-sialylated GD1b, in both monomeric forms and micelles. Hydrolyzes exclusively monomeric GM1 ganglioside, but has no activity toward the miscellar form. Has lower sialidase activity for glycoproteins such as fetuin and TF/transferrin that carry a mixture of alpha-(2-&gt;3) and alpha-(2-&gt;6)-sialyl linkages. Cleaves milk oligosaccharide alpha-(2-&gt;3)-sialyllactose, but is inactive toward isomer alpha-(2-&gt;6)-sialyllactose isomer. Has no activity toward colominic acid, a homomer of alpha-(2-&gt;8)-linked Neu5Ac residues. This Mus musculus (Mouse) protein is Sialidase-2 (Neu2).